The primary structure comprises 521 residues: Bifunctional purine biosynthesis protein PurH (521 aa).

The 147-residue stretch at Met-1–Val-147 folds into the MGS-like domain.

It belongs to the PurH family.

The catalysed reaction is (6R)-10-formyltetrahydrofolate + 5-amino-1-(5-phospho-beta-D-ribosyl)imidazole-4-carboxamide = 5-formamido-1-(5-phospho-D-ribosyl)imidazole-4-carboxamide + (6S)-5,6,7,8-tetrahydrofolate. It carries out the reaction IMP + H2O = 5-formamido-1-(5-phospho-D-ribosyl)imidazole-4-carboxamide. The protein operates within purine metabolism; IMP biosynthesis via de novo pathway; 5-formamido-1-(5-phospho-D-ribosyl)imidazole-4-carboxamide from 5-amino-1-(5-phospho-D-ribosyl)imidazole-4-carboxamide (10-formyl THF route): step 1/1. Its pathway is purine metabolism; IMP biosynthesis via de novo pathway; IMP from 5-formamido-1-(5-phospho-D-ribosyl)imidazole-4-carboxamide: step 1/1. The protein is Bifunctional purine biosynthesis protein PurH of Acidithiobacillus ferrooxidans (strain ATCC 53993 / BNL-5-31) (Leptospirillum ferrooxidans (ATCC 53993)).